A 426-amino-acid polypeptide reads, in one-letter code: Glutamate-1-semialdehyde 2,1-aminomutase (426 aa).

An N6-(pyridoxal phosphate)lysine modification is found at lysine 264.

It belongs to the class-III pyridoxal-phosphate-dependent aminotransferase family. HemL subfamily. Requires pyridoxal 5'-phosphate as cofactor.

Its subcellular location is the cytoplasm. The enzyme catalyses (S)-4-amino-5-oxopentanoate = 5-aminolevulinate. It participates in porphyrin-containing compound metabolism; protoporphyrin-IX biosynthesis; 5-aminolevulinate from L-glutamyl-tRNA(Glu): step 2/2. The chain is Glutamate-1-semialdehyde 2,1-aminomutase from Methanocella arvoryzae (strain DSM 22066 / NBRC 105507 / MRE50).